Reading from the N-terminus, the 183-residue chain is ESX-1 secretion-associated protein EspH (183 aa).

Acidic residues predominate over residues 1–16 (MVDPPGNDDDHGDLDA). The tract at residues 1-32 (MVDPPGNDDDHGDLDALDFSAAHTNEASPLDA) is disordered.

The sequence is that of ESX-1 secretion-associated protein EspH from Mycobacterium tuberculosis (strain ATCC 25618 / H37Rv).